A 258-amino-acid polypeptide reads, in one-letter code: ProSAAS (258 aa).

An N-terminal signal peptide occupies residues 1–33; it reads MAGSPLLCGPRAGGVGILVLLLLGLLRLPPTLS. A proSAAS(1-180) region spans residues 34–213; the sequence is ARPVKEPRSL…SSEPEAAPAP (180 aa). Disordered regions lie at residues 156-188, 204-230, and 239-258; these read PAPA…TPDV, SSEP…EVPP, and RVKR…LLPP. A compositionally biased stretch (acidic residues) spans 177 to 188; that stretch reads DVEDAGDETPDV. Residues 204–213 show a composition bias toward low complexity; the sequence is SSEPEAAPAP. The C-terminal inhibitory domain; interacts with PCSK1 stretch occupies residues 219-258; that stretch reads SVDQDLGPEVPPENVLGALLRVKRLENPSPQAPARRLLPP. The Sufficient for inhibition of PCSK1 motif lies at 237 to 242; it reads LLRVKR.

In terms of assembly, interacts via the C-terminal inhibitory domain with PCSK1 66 kDa form. Proteolytically cleaved in the Golgi. Little SAAS, PEN, PEN-20 and Big LEN are the major processed peptides in proSAAS-overexpressing AtT-20 pituitary corticotropic cell line. In terms of tissue distribution, expressed in brain (mostly hypothalamus and pituitary) and gut. Expressed in trigeminal ganglia and neuroendocrine cell lines. As to expression, expressed in pancreas, spinal cord and brain (most abundant in striatum, hippocampus, pons and medulla, and cortex) (at protein level).

It is found in the secreted. It localises to the golgi apparatus. The protein localises to the trans-Golgi network. Its function is as follows. May function in the control of the neuroendocrine secretory pathway. Proposed be a specific endogenous inhibitor of PCSK1. ProSAAS and Big PEN-LEN, both containing the C-terminal inhibitory domain, but not the processed peptides reduce PCSK1 activity in the endoplasmic reticulum and Golgi. It reduces the activity of the 87 kDa form but not the autocatalytically derived 66 kDa form of PCSK1. Subsequent processing of proSAAS may eliminate the inhibition. Slows down convertase-mediated processing of proopiomelanocortin and proenkephalin. May control the intracellular timing of PCSK1 rather than its total level of activity. Functionally, endogenous ligand for GPR171. Neuropeptide involved in the regulation of feeding. In terms of biological role, endogenous ligand for GPR171. Neuropeptide involved in the regulation of feeding. The chain is ProSAAS (Pcsk1n) from Mus musculus (Mouse).